A 148-amino-acid chain; its full sequence is uncharacterized protein (148 aa).

The segment covering 97 to 112 (KKLDEQRMPGKPKNTE) has biased composition (basic and acidic residues). The tract at residues 97 to 126 (KKLDEQRMPGKPKNTEGSKSTIRKKANVGN) is disordered.

This is an uncharacterized protein from Caenorhabditis elegans.